We begin with the raw amino-acid sequence, 701 residues long: Ribosomal RNA large subunit methyltransferase K/L (701 aa).

Residues 44–155 (QAYKICLWSR…SDKLTVYLDL (112 aa)) enclose the THUMP domain.

It belongs to the methyltransferase superfamily. RlmKL family.

Its subcellular location is the cytoplasm. It carries out the reaction guanosine(2445) in 23S rRNA + S-adenosyl-L-methionine = N(2)-methylguanosine(2445) in 23S rRNA + S-adenosyl-L-homocysteine + H(+). It catalyses the reaction guanosine(2069) in 23S rRNA + S-adenosyl-L-methionine = N(2)-methylguanosine(2069) in 23S rRNA + S-adenosyl-L-homocysteine + H(+). Specifically methylates the guanine in position 2445 (m2G2445) and the guanine in position 2069 (m7G2069) of 23S rRNA. The polypeptide is Ribosomal RNA large subunit methyltransferase K/L (Pseudoalteromonas atlantica (strain T6c / ATCC BAA-1087)).